The chain runs to 181 residues: Crossover junction endodeoxyribonuclease RuvC (181 aa).

Catalysis depends on residues Asp-7, Glu-67, and Asp-139. 3 residues coordinate Mg(2+): Asp-7, Glu-67, and Asp-139.

This sequence belongs to the RuvC family. As to quaternary structure, homodimer which binds Holliday junction (HJ) DNA. The HJ becomes 2-fold symmetrical on binding to RuvC with unstacked arms; it has a different conformation from HJ DNA in complex with RuvA. In the full resolvosome a probable DNA-RuvA(4)-RuvB(12)-RuvC(2) complex forms which resolves the HJ. Mg(2+) is required as a cofactor.

The protein resides in the cytoplasm. It carries out the reaction Endonucleolytic cleavage at a junction such as a reciprocal single-stranded crossover between two homologous DNA duplexes (Holliday junction).. Its function is as follows. The RuvA-RuvB-RuvC complex processes Holliday junction (HJ) DNA during genetic recombination and DNA repair. Endonuclease that resolves HJ intermediates. Cleaves cruciform DNA by making single-stranded nicks across the HJ at symmetrical positions within the homologous arms, yielding a 5'-phosphate and a 3'-hydroxyl group; requires a central core of homology in the junction. The consensus cleavage sequence is 5'-(A/T)TT(C/G)-3'. Cleavage occurs on the 3'-side of the TT dinucleotide at the point of strand exchange. HJ branch migration catalyzed by RuvA-RuvB allows RuvC to scan DNA until it finds its consensus sequence, where it cleaves and resolves the cruciform DNA. In Cupriavidus taiwanensis (strain DSM 17343 / BCRC 17206 / CCUG 44338 / CIP 107171 / LMG 19424 / R1) (Ralstonia taiwanensis (strain LMG 19424)), this protein is Crossover junction endodeoxyribonuclease RuvC.